The primary structure comprises 386 residues: Diaminopimelate decarboxylase (386 aa).

Lysine 49 is modified (N6-(pyridoxal phosphate)lysine). Pyridoxal 5'-phosphate contacts are provided by residues glycine 228 and 266-269 (ELGR). Substrate-binding residues include arginine 269, arginine 305, tyrosine 309, glutamate 335, and tyrosine 363. A pyridoxal 5'-phosphate-binding site is contributed by tyrosine 363.

Belongs to the Orn/Lys/Arg decarboxylase class-II family. LysA subfamily. Homodimer. Requires pyridoxal 5'-phosphate as cofactor.

The catalysed reaction is meso-2,6-diaminopimelate + H(+) = L-lysine + CO2. The protein operates within amino-acid biosynthesis; L-lysine biosynthesis via DAP pathway; L-lysine from DL-2,6-diaminopimelate: step 1/1. In terms of biological role, specifically catalyzes the decarboxylation of meso-diaminopimelate (meso-DAP) to L-lysine. The chain is Diaminopimelate decarboxylase from Bacteroides thetaiotaomicron (strain ATCC 29148 / DSM 2079 / JCM 5827 / CCUG 10774 / NCTC 10582 / VPI-5482 / E50).